A 400-amino-acid chain; its full sequence is 11-beta-hydroxysteroid dehydrogenase type 2 (400 aa).

Position 82-111 (82-111 (TRAVLITGCDTGFGKETAKKLDAMGFTVLA)) interacts with NAD(+). Residue Ser219 coordinates substrate. The active-site Proton acceptor is Tyr232. Residues 378-400 (PGQPGPVHDTTQDPNPSPTVSAL) are disordered. Residues 389 to 400 (QDPNPSPTVSAL) are compositionally biased toward polar residues.

The protein belongs to the short-chain dehydrogenases/reductases (SDR) family. As to quaternary structure, interacts with ligand-free cytoplasmic NR3C2. In terms of tissue distribution, highly expressed in kidney, adrenal gland and distal colon, and at much lower levels in lung, hypothalamus, hippocampus, and midbrain.

It is found in the microsome. The protein resides in the endoplasmic reticulum. The enzyme catalyses an 11beta-hydroxysteroid + NAD(+) = an 11-oxosteroid + NADH + H(+). It catalyses the reaction corticosterone + NAD(+) = 11-dehydrocorticosterone + NADH + H(+). The catalysed reaction is 11beta,17beta-dihydroxyandrost-4-ene-3-one + NAD(+) = 17beta-hydroxyandrost-4-ene-3,11-dione + NADH + H(+). It carries out the reaction 11beta-hydroxyandrost-4-ene-3,17-dione + NAD(+) = androst-4-ene-3,11,17-trione + NADH + H(+). It participates in steroid metabolism. Its activity is regulated as follows. Inhibited by glycyrrhetinic acid. Induced by progesterone, through the Ihh signaling pathway. Its function is as follows. Catalyzes the conversion of biologically active 11beta-hydroxyglucocorticoids (11beta-hydroxysteroid) such as corticosterone, to inactive 11-ketoglucocorticoids (11-oxosteroid) such as 11-dehydrocorticosterone, in the presence of NAD(+). Functions as a dehydrogenase (oxidase), thereby decreasing the concentration of active glucocorticoids, thus protecting the nonselective mineralocorticoid receptor from occupation by glucocorticoids. Plays an important role in maintaining glucocorticoids balance during preimplantation and protects the fetus from excessive maternal corticosterone exposure. Catalyzes the oxidation of 11beta-hydroxytestosterone (11beta,17beta-dihydroxyandrost-4-ene-3-one) to 11-ketotestosterone (17beta-hydroxyandrost-4-ene-3,11-dione), a major bioactive androgen. Catalyzes the conversion of 11beta-hydroxyandrostenedione (11beta-hydroxyandrost-4-ene-3,17-dione) to 11-ketoandrostenedione (androst-4-ene-3,11,17-trione), which can be further metabolized to 11-ketotestosterone. Converts 7-beta-25-dihydroxycholesterol to 7-oxo-25-hydroxycholesterol in vitro. 7-beta-25-dihydroxycholesterol (not 7-oxo-25-hydroxycholesterol) acts as a ligand for the G-protein-coupled receptor (GPCR) Epstein-Barr virus-induced gene 2 (EBI2) and may thereby regulate immune cell migration. This is 11-beta-hydroxysteroid dehydrogenase type 2 (Hsd11b2) from Rattus norvegicus (Rat).